A 479-amino-acid polypeptide reads, in one-letter code: BRAP2 RING ZnF UBP domain-containing protein 2 (479 aa).

The RING-type; atypical zinc finger occupies 167–207 (CPVCLERLDQDTGGILTTMCNHSFHCSCISNWPDSSCPVCR). The UBP-type; degenerate zinc finger occupies 201-294 (SSCPVCRYCQ…GKLVELNSHG (94 aa)). Residues Cys218, Cys221, Cys230, Cys233, Cys238, His245, His249, and His255 each coordinate Zn(2+). Residues 328–442 (NELLQAQLEN…MAQMDGESEV (115 aa)) adopt a coiled-coil conformation. The segment at 434 to 479 (AQMDGESEVSETKEVQDATVSTTNTSSSGAGNVIHANKKKSNRRKG) is disordered. Residues 451 to 466 (ATVSTTNTSSSGAGNV) are compositionally biased toward low complexity. Positions 469-479 (ANKKKSNRRKG) are enriched in basic residues.

As to quaternary structure, component of the heteromeric E3 ligase complex made of BRIZ1 and BRIZ2. Forms heterooligomers with BRIZ1 via coiled-coil domains.

The catalysed reaction is S-ubiquitinyl-[E2 ubiquitin-conjugating enzyme]-L-cysteine + [acceptor protein]-L-lysine = [E2 ubiquitin-conjugating enzyme]-L-cysteine + N(6)-ubiquitinyl-[acceptor protein]-L-lysine.. It functions in the pathway protein modification; protein ubiquitination. Its function is as follows. RING-type ubiquitin E3 ligase that binds ubiquitin and is required for seed germination and post-germination growth. The polypeptide is BRAP2 RING ZnF UBP domain-containing protein 2 (Arabidopsis thaliana (Mouse-ear cress)).